Reading from the N-terminus, the 73-residue chain is uncharacterized protein (73 aa).

This is an uncharacterized protein from Vaccinia virus (strain Copenhagen) (VACV).